Reading from the N-terminus, the 135-residue chain is ATP synthase epsilon chain (135 aa).

The protein belongs to the ATPase epsilon chain family. As to quaternary structure, F-type ATPases have 2 components, CF(1) - the catalytic core - and CF(0) - the membrane proton channel. CF(1) has five subunits: alpha(3), beta(3), gamma(1), delta(1), epsilon(1). CF(0) has three main subunits: a, b and c.

It is found in the cell inner membrane. Functionally, produces ATP from ADP in the presence of a proton gradient across the membrane. In Hyphomonas neptunium (strain ATCC 15444), this protein is ATP synthase epsilon chain.